The following is a 272-amino-acid chain: HMP-PP phosphatase (272 aa).

Aspartate 8 serves as the catalytic Nucleophile. Mg(2+)-binding residues include aspartate 8, aspartate 10, and aspartate 212.

Belongs to the HAD-like hydrolase superfamily. Cof family. Mg(2+) serves as cofactor.

It catalyses the reaction 4-amino-2-methyl-5-(diphosphooxymethyl)pyrimidine + H2O = 4-amino-2-methyl-5-(phosphooxymethyl)pyrimidine + phosphate + H(+). In terms of biological role, catalyzes the hydrolysis of 4-amino-2-methyl-5-hydroxymethylpyrimidine pyrophosphate (HMP-PP) to 4-amino-2-methyl-5-hydroxymethylpyrimidine phosphate (HMP-P). This is HMP-PP phosphatase from Salmonella schwarzengrund (strain CVM19633).